Consider the following 441-residue polypeptide: ATP-dependent protease ATPase subunit HslU (441 aa).

ATP contacts are provided by residues I18, 60–65, D254, E319, and R391; that span reads GVGKTE.

Belongs to the ClpX chaperone family. HslU subfamily. A double ring-shaped homohexamer of HslV is capped on each side by a ring-shaped HslU homohexamer. The assembly of the HslU/HslV complex is dependent on binding of ATP.

It is found in the cytoplasm. Its function is as follows. ATPase subunit of a proteasome-like degradation complex; this subunit has chaperone activity. The binding of ATP and its subsequent hydrolysis by HslU are essential for unfolding of protein substrates subsequently hydrolyzed by HslV. HslU recognizes the N-terminal part of its protein substrates and unfolds these before they are guided to HslV for hydrolysis. The protein is ATP-dependent protease ATPase subunit HslU of Shewanella loihica (strain ATCC BAA-1088 / PV-4).